Reading from the N-terminus, the 382-residue chain is 6-hydroxynicotinate 3-monooxygenase (382 aa).

An N-terminal signal peptide occupies residues 1-25; that stretch reads MRGRQKIAIVGAGLGGAAAATLLQQ. FAD-binding positions include glycine 15, 34–35, histidine 47, arginine 108, and leucine 130; that span reads EQ. Residue histidine 47 is the Proton acceptor of the active site. Catalysis depends on tyrosine 215, which acts as the Proton acceptor. FAD contacts are provided by residues aspartate 294 and 307–308; that span reads AC.

Belongs to the 6-hydroxynicotinate 3-monooxygenase family. As to quaternary structure, monomer. FAD is required as a cofactor.

It carries out the reaction 6-hydroxynicotinate + NADH + O2 + 2 H(+) = 2,5-dihydroxypyridine + CO2 + NAD(+) + H2O. It participates in cofactor degradation; nicotinate degradation. Flavin-dependent monooxygenase (FMO) that catalyzes the decarboxylative hydroxylation of 6-hydroxynicotinic acid (6-HNA) to 2,5-dihydroxypyridine (2,5-DHP) with concomitant oxidation of NADH, a step in the aerobic nicotinate degradation pathway. The sequence is that of 6-hydroxynicotinate 3-monooxygenase from Pseudomonas putida (strain ATCC 47054 / DSM 6125 / CFBP 8728 / NCIMB 11950 / KT2440).